The chain runs to 163 residues: Anaerobic nitrite reductase HB1 (163 aa).

A Globin domain is found at valine 8 to lysine 157. Positions glutamate 41 to serine 45 match the Homodimerization motif. Serine 51, lysine 65, histidine 69, lysine 99, threonine 103, and histidine 104 together coordinate heme b. Positions aspartate 111–glutamate 123 match the Homodimerization motif.

The protein belongs to the plant globin family. Homodimer. The cofactor is heme b.

The protein resides in the cytoplasm. The protein localises to the nucleus. It catalyses the reaction Fe(III)-heme b-[protein] + nitric oxide + H2O = Fe(II)-heme b-[protein] + nitrite + 2 H(+). Functionally, phytoglobin that reduces nitrite to nitric oxide (NO) under anoxic conditions (e.g. during flooding or in waterlogged soil). May not function as an oxygen storage or transport protein. Has an unusually high affinity for O(2) through an hexacoordinate heme iron because of a very low dissociation constant. In Gossypium hirsutum (Upland cotton), this protein is Anaerobic nitrite reductase HB1.